The sequence spans 402 residues: Propionate kinase (402 aa).

The ATP site is built by Asn11 and Lys18. Asn11 is a binding site for Mg(2+). Arg86 lines the substrate pocket. The active-site Proton donor/acceptor is the Asp143. ATP-binding positions include His175, His203–Gly207, Asp278–Arg280, and Gly326–Asn330.

The protein belongs to the acetokinase family. TdcD subfamily. In terms of assembly, homodimer. Mg(2+) serves as cofactor.

The catalysed reaction is propanoate + ATP = propanoyl phosphate + ADP. Its pathway is amino-acid degradation; L-threonine degradation via propanoate pathway; propanoate from L-threonine: step 4/4. Functionally, catalyzes the conversion of propionyl phosphate and ADP to propionate and ATP. This is Propionate kinase from Salmonella agona (strain SL483).